Consider the following 311-residue polypeptide: MTDSESPTPKKSIPARFPKWLRQKLPLGRVFAQTDNTIKNKGLPTVCEEASCPNRTHCWSRHTATYLALGDACTRRCGFCDIDFTRNPLPPDPEEGAKIAESAKALGLKHIVITMVSRDDLEDGGASALVHIIETLHTELPTATIEVLASDFEGNIAALHHLLDAHIAIYNHNVETVERLTPFVRHKATYRRSLMMLENAAKYLPNLMTKSGIMVGLGEQESEVKQTLKDLADHGVKIVTIGQYLRPSRRHIPVKSYVSPETFDYYRSVGESLGLFIYAGPFVRSSFNADSVFEAMRQRETSTSSLLPNKD.

[4Fe-4S] cluster-binding residues include Cys-47, Cys-52, Cys-58, Cys-73, Cys-77, Cys-80, and Ser-286. The region spanning 59–276 is the Radical SAM core domain; sequence WSRHTATYLA…RSVGESLGLF (218 aa).

The protein belongs to the radical SAM superfamily. Lipoyl synthase family. Requires [4Fe-4S] cluster as cofactor.

It localises to the cytoplasm. The catalysed reaction is [[Fe-S] cluster scaffold protein carrying a second [4Fe-4S](2+) cluster] + N(6)-octanoyl-L-lysyl-[protein] + 2 oxidized [2Fe-2S]-[ferredoxin] + 2 S-adenosyl-L-methionine + 4 H(+) = [[Fe-S] cluster scaffold protein] + N(6)-[(R)-dihydrolipoyl]-L-lysyl-[protein] + 4 Fe(3+) + 2 hydrogen sulfide + 2 5'-deoxyadenosine + 2 L-methionine + 2 reduced [2Fe-2S]-[ferredoxin]. It participates in protein modification; protein lipoylation via endogenous pathway; protein N(6)-(lipoyl)lysine from octanoyl-[acyl-carrier-protein]: step 2/2. In terms of biological role, catalyzes the radical-mediated insertion of two sulfur atoms into the C-6 and C-8 positions of the octanoyl moiety bound to the lipoyl domains of lipoate-dependent enzymes, thereby converting the octanoylated domains into lipoylated derivatives. This chain is Lipoyl synthase, found in Chlamydia trachomatis serovar A (strain ATCC VR-571B / DSM 19440 / HAR-13).